Consider the following 109-residue polypeptide: Small ribosomal subunit protein eS25z (109 aa).

The disordered stretch occupies residues 1 to 36; that stretch reads MAPKKDKVPPPSSKPAKSGGGKQKKKKWSKGKQKEK. The span at 22-31 shows a compositional bias: basic residues; it reads KQKKKKWSKG.

It belongs to the eukaryotic ribosomal protein eS25 family.

The protein is Small ribosomal subunit protein eS25z (RPS25A) of Arabidopsis thaliana (Mouse-ear cress).